We begin with the raw amino-acid sequence, 158 residues long: Snaclec stejaggregin-A subunit alpha (158 aa).

The signal sequence occupies residues 1-23 (MGRFISVSFGLLVVFLSLSGTGA). 3 disulfide bridges follow: cysteine 27–cysteine 38, cysteine 55–cysteine 152, and cysteine 127–cysteine 144. Positions 34 to 153 (YDWYCYKPFN…CQAKNPFVCK (120 aa)) constitute a C-type lectin domain.

This sequence belongs to the snaclec family. Heteromultimer; disulfide-linked. Expressed by the venom gland.

It localises to the secreted. Functionally, interferes with one step of hemostasis (modulation of platelet aggregation, or coagulation cascade, for example). In Trimeresurus stejnegeri (Chinese green tree viper), this protein is Snaclec stejaggregin-A subunit alpha.